The following is a 739-amino-acid chain: Phosphoribosylformylglycinamidine synthase subunit PurL (739 aa).

Histidine 52 is an active-site residue. Residues tyrosine 55 and lysine 94 each contribute to the ATP site. Glutamate 96 contributes to the Mg(2+) binding site. Substrate contacts are provided by residues 97-100 (SHNH) and arginine 119. The active-site Proton acceptor is histidine 98. Aspartate 120 contributes to the Mg(2+) binding site. Glutamine 243 is a substrate binding site. Mg(2+) is bound at residue aspartate 273. A substrate-binding site is contributed by 317–319 (ESQ). ATP is bound by residues aspartate 500 and glycine 537. Asparagine 538 serves as a coordination point for Mg(2+). Serine 540 is a binding site for substrate.

Belongs to the FGAMS family. In terms of assembly, monomer. Part of the FGAM synthase complex composed of 1 PurL, 1 PurQ and 2 PurS subunits.

The protein resides in the cytoplasm. The enzyme catalyses N(2)-formyl-N(1)-(5-phospho-beta-D-ribosyl)glycinamide + L-glutamine + ATP + H2O = 2-formamido-N(1)-(5-O-phospho-beta-D-ribosyl)acetamidine + L-glutamate + ADP + phosphate + H(+). It participates in purine metabolism; IMP biosynthesis via de novo pathway; 5-amino-1-(5-phospho-D-ribosyl)imidazole from N(2)-formyl-N(1)-(5-phospho-D-ribosyl)glycinamide: step 1/2. Functionally, part of the phosphoribosylformylglycinamidine synthase complex involved in the purines biosynthetic pathway. Catalyzes the ATP-dependent conversion of formylglycinamide ribonucleotide (FGAR) and glutamine to yield formylglycinamidine ribonucleotide (FGAM) and glutamate. The FGAM synthase complex is composed of three subunits. PurQ produces an ammonia molecule by converting glutamine to glutamate. PurL transfers the ammonia molecule to FGAR to form FGAM in an ATP-dependent manner. PurS interacts with PurQ and PurL and is thought to assist in the transfer of the ammonia molecule from PurQ to PurL. This chain is Phosphoribosylformylglycinamidine synthase subunit PurL, found in Enterococcus faecalis (strain ATCC 700802 / V583).